The primary structure comprises 199 residues: 3-isopropylmalate dehydratase small subunit (199 aa).

Belongs to the LeuD family. LeuD type 1 subfamily. In terms of assembly, heterodimer of LeuC and LeuD.

The catalysed reaction is (2R,3S)-3-isopropylmalate = (2S)-2-isopropylmalate. It participates in amino-acid biosynthesis; L-leucine biosynthesis; L-leucine from 3-methyl-2-oxobutanoate: step 2/4. Catalyzes the isomerization between 2-isopropylmalate and 3-isopropylmalate, via the formation of 2-isopropylmaleate. The polypeptide is 3-isopropylmalate dehydratase small subunit (Tolumonas auensis (strain DSM 9187 / NBRC 110442 / TA 4)).